We begin with the raw amino-acid sequence, 82 residues long: Cytochrome b559 subunit alpha (82 aa).

Residues 22–36 form a helical membrane-spanning segment; it reads IIHAVALPAIFVAGF. A heme-binding site is contributed by His24.

Belongs to the PsbE/PsbF family. In terms of assembly, heterodimer of an alpha subunit and a beta subunit. PSII is composed of 1 copy each of membrane proteins PsbA, PsbB, PsbC, PsbD, PsbE, PsbF, PsbH, PsbI, PsbJ, PsbK, PsbL, PsbM, PsbT, PsbX, PsbY, Psb30/Ycf12, peripheral proteins PsbO, CyanoQ (PsbQ), PsbU, PsbV and a large number of cofactors. It forms dimeric complexes. Heme b serves as cofactor.

The protein localises to the cellular thylakoid membrane. Its function is as follows. This b-type cytochrome is tightly associated with the reaction center of photosystem II (PSII). PSII is a light-driven water:plastoquinone oxidoreductase that uses light energy to abstract electrons from H(2)O, generating O(2) and a proton gradient subsequently used for ATP formation. It consists of a core antenna complex that captures photons, and an electron transfer chain that converts photonic excitation into a charge separation. The sequence is that of Cytochrome b559 subunit alpha from Prochlorococcus marinus (strain NATL1A).